A 554-amino-acid polypeptide reads, in one-letter code: Trimethyltridecatetraene synthase (554 aa).

Residues Met-1 to Ser-21 traverse the membrane as a helical segment. A heme-binding site is contributed by Cys-464.

The protein belongs to the cytochrome P450 family. Heme is required as a cofactor.

Its subcellular location is the membrane. It carries out the reaction (6E,10E)-geranyllinalool + reduced [NADPH--hemoprotein reductase] + O2 = (3E,7E)-4,8,12-trimethyltrideca 1,3,7,11-tetraene + but-3-en-2-one + oxidized [NADPH--hemoprotein reductase] + 2 H2O + H(+). Its pathway is secondary metabolite biosynthesis; terpenoid biosynthesis. Component of the volatile terpenes biosynthesis pathways. Converts mainly geranyllinalool to trimethyltridecatetraene (TMTT). This Zea mays (Maize) protein is Trimethyltridecatetraene synthase.